Consider the following 600-residue polypeptide: Elongation factor 4 (600 aa).

The tr-type G domain maps to 13–194 (DRIRNFCIIA…AIVERIPPPR (182 aa)). Residues 25–30 (DHGKST) and 141–144 (NKID) each bind GTP.

The protein belongs to the TRAFAC class translation factor GTPase superfamily. Classic translation factor GTPase family. LepA subfamily.

It localises to the cell membrane. It catalyses the reaction GTP + H2O = GDP + phosphate + H(+). In terms of biological role, required for accurate and efficient protein synthesis under certain stress conditions. May act as a fidelity factor of the translation reaction, by catalyzing a one-codon backward translocation of tRNAs on improperly translocated ribosomes. Back-translocation proceeds from a post-translocation (POST) complex to a pre-translocation (PRE) complex, thus giving elongation factor G a second chance to translocate the tRNAs correctly. Binds to ribosomes in a GTP-dependent manner. This Rubrobacter xylanophilus (strain DSM 9941 / JCM 11954 / NBRC 16129 / PRD-1) protein is Elongation factor 4.